The sequence spans 284 residues: D-tagatose-1,6-bisphosphate aldolase subunit GatY (284 aa).

Residue Asp-82 is the Proton donor of the active site. Residues His-83 and His-180 each coordinate Zn(2+). Residue Gly-181 participates in dihydroxyacetone phosphate binding. A Zn(2+)-binding site is contributed by His-208. Dihydroxyacetone phosphate is bound by residues 209-211 and 230-233; these read GAS and NVAT.

The protein belongs to the class II fructose-bisphosphate aldolase family. TagBP aldolase GatY subfamily. Forms a complex with GatZ. Zn(2+) is required as a cofactor.

The catalysed reaction is D-tagatofuranose 1,6-bisphosphate = D-glyceraldehyde 3-phosphate + dihydroxyacetone phosphate. The protein operates within carbohydrate metabolism; D-tagatose 6-phosphate degradation; D-glyceraldehyde 3-phosphate and glycerone phosphate from D-tagatose 6-phosphate: step 2/2. Its function is as follows. Catalytic subunit of the tagatose-1,6-bisphosphate aldolase GatYZ, which catalyzes the reversible aldol condensation of dihydroxyacetone phosphate (DHAP or glycerone-phosphate) with glyceraldehyde 3-phosphate (G3P) to produce tagatose 1,6-bisphosphate (TBP). Requires GatZ subunit for full activity and stability. Is involved in the catabolism of galactitol. The chain is D-tagatose-1,6-bisphosphate aldolase subunit GatY (gatY) from Escherichia coli.